Reading from the N-terminus, the 367-residue chain is Flagellar P-ring protein (367 aa).

Residues 1–21 (MKIIQTFFIITLLWLSQGVQA) form the signal peptide.

It belongs to the FlgI family. In terms of assembly, the basal body constitutes a major portion of the flagellar organelle and consists of four rings (L,P,S, and M) mounted on a central rod.

It is found in the periplasm. Its subcellular location is the bacterial flagellum basal body. Functionally, assembles around the rod to form the L-ring and probably protects the motor/basal body from shearing forces during rotation. This is Flagellar P-ring protein from Nitrosococcus oceani (strain ATCC 19707 / BCRC 17464 / JCM 30415 / NCIMB 11848 / C-107).